Here is a 160-residue protein sequence, read N- to C-terminus: Protransforming growth factor alpha (160 aa).

An N-terminal signal peptide occupies residues Met-1–Leu-23. A propeptide spans Glu-24 to Ala-39 (removed in mature form). The Extracellular segment spans residues Glu-24–Gln-98. Residue Asn-25 is glycosylated (N-linked (GlcNAc...) asparagine). In terms of domain architecture, EGF-like spans His-43 to Glu-83. Disulfide bonds link Cys-47–Cys-60, Cys-55–Cys-71, and Cys-73–Cys-82. A propeptide spans Val-90–Val-160 (removed in mature form). A helical membrane pass occupies residues Ala-99–Cys-124. Over Gln-125–Val-160 the chain is Cytoplasmic. Residues Cys-153 and Cys-154 are each lipidated (S-palmitoyl cysteine).

In terms of assembly, interacts with the PDZ domains of MAGI3, SDCBP and SNTA1. The interaction with SDCBP, is required for the targeting to the cell surface. In the endoplasmic reticulum, in its immature form (i.e. with a prosegment and lacking full N-glycosylation), interacts with CNIH. In the Golgi apparatus, may form a complex with CNIH and GORASP2. Interacts (via cytoplasmic C-terminal domain) with NKD2.

The protein resides in the secreted. Its subcellular location is the extracellular space. The protein localises to the cell membrane. Functionally, TGF alpha is a mitogenic polypeptide that is able to bind to the EGF receptor/EGFR and to act synergistically with TGF beta to promote anchorage-independent cell proliferation in soft agar. This chain is Protransforming growth factor alpha (TGFA), found in Sus scrofa (Pig).